We begin with the raw amino-acid sequence, 498 residues long: Putative BTB/POZ domain-containing protein L788 (498 aa).

The region spanning 28–99 (TDIILVLEDD…FYGQKIKSGN (72 aa)) is the BTB domain.

This sequence belongs to the mimivirus BTB/WD family.

The polypeptide is Putative BTB/POZ domain-containing protein L788 (Acanthamoeba polyphaga (Amoeba)).